A 139-amino-acid chain; its full sequence is D-ribose pyranase (139 aa).

Catalysis depends on His20, which acts as the Proton donor. Substrate-binding positions include Asp28, His106, and 128–130 (YAN).

The protein belongs to the RbsD / FucU family. RbsD subfamily. As to quaternary structure, homodecamer.

The protein localises to the cytoplasm. The enzyme catalyses beta-D-ribopyranose = beta-D-ribofuranose. Its pathway is carbohydrate metabolism; D-ribose degradation; D-ribose 5-phosphate from beta-D-ribopyranose: step 1/2. Functionally, catalyzes the interconversion of beta-pyran and beta-furan forms of D-ribose. The sequence is that of D-ribose pyranase from Escherichia coli O139:H28 (strain E24377A / ETEC).